Consider the following 142-residue polypeptide: Midkine-A (142 aa).

The signal sequence occupies residues 1–20 (MELRAFCVILLITVLAVSSQ). 5 disulfide bridges follow: Cys-36–Cys-60, Cys-44–Cys-69, Cys-51–Cys-73, Cys-83–Cys-115, and Cys-93–Cys-125.

It belongs to the pleiotrophin family. As to expression, expression at the mid-gastrula stage begins in the neural anlage, and becomes increasingly prominent in the central nervous system and head mesenchyme during neurula stages. Although the mRNA is localized to the developing central nervous system (CNS), the protein is deposited at the neuromuscular junction (NMJ). In the tailbud stage embryo, expressed in the head and tail regions as well as in the CNS. In adults, expression is highest in the brain, eye and bone, with lower expression in the heart and lung. Not expressed in the ovary.

The protein resides in the secreted. Functionally, secreted protein that functions as a cytokine and growth factor and mediates its signal through cell-surface proteoglycan and non-proteoglycan receptors. Binds cell-surface proteoglycan receptors via their chondroitin sulfate (CS) groups. Thereby regulates many processes like inflammatory response, cell proliferation, cell adhesion, cell growth, cell survival, tissue regeneration, cell differentiation and cell migration. Inhibits mesoderm formation and promotes neural formation during development. Plays a role in development of the neuromuscular junction (NMJ). Has antibacterial activity against both Gram-positive and Gram-negative bacteria. This chain is Midkine-A (mdk-a), found in Xenopus laevis (African clawed frog).